The chain runs to 160 residues: Transcription elongation factor GreA (160 aa).

Positions 1 to 72 form a coiled coil; the sequence is MAEKTYVMTL…QIQILETKIR (72 aa).

The protein belongs to the GreA/GreB family.

In terms of biological role, necessary for efficient RNA polymerase transcription elongation past template-encoded arresting sites. The arresting sites in DNA have the property of trapping a certain fraction of elongating RNA polymerases that pass through, resulting in locked ternary complexes. Cleavage of the nascent transcript by cleavage factors such as GreA or GreB allows the resumption of elongation from the new 3'terminus. GreA releases sequences of 2 to 3 nucleotides. This Streptococcus thermophilus (strain CNRZ 1066) protein is Transcription elongation factor GreA.